A 273-amino-acid polypeptide reads, in one-letter code: Ribosomal RNA small subunit methyltransferase A (273 aa).

Residues N18, L20, G45, E66, D91, and N113 each coordinate S-adenosyl-L-methionine.

This sequence belongs to the class I-like SAM-binding methyltransferase superfamily. rRNA adenine N(6)-methyltransferase family. RsmA subfamily.

Its subcellular location is the cytoplasm. It catalyses the reaction adenosine(1518)/adenosine(1519) in 16S rRNA + 4 S-adenosyl-L-methionine = N(6)-dimethyladenosine(1518)/N(6)-dimethyladenosine(1519) in 16S rRNA + 4 S-adenosyl-L-homocysteine + 4 H(+). Functionally, specifically dimethylates two adjacent adenosines (A1518 and A1519) in the loop of a conserved hairpin near the 3'-end of 16S rRNA in the 30S particle. May play a critical role in biogenesis of 30S subunits. This Salmonella newport (strain SL254) protein is Ribosomal RNA small subunit methyltransferase A.